A 185-amino-acid polypeptide reads, in one-letter code: Elongation factor P (185 aa).

The protein belongs to the elongation factor P family.

The protein localises to the cytoplasm. Its pathway is protein biosynthesis; polypeptide chain elongation. In terms of biological role, involved in peptide bond synthesis. Stimulates efficient translation and peptide-bond synthesis on native or reconstituted 70S ribosomes in vitro. Probably functions indirectly by altering the affinity of the ribosome for aminoacyl-tRNA, thus increasing their reactivity as acceptors for peptidyl transferase. The polypeptide is Elongation factor P (Mesomycoplasma hyopneumoniae (strain 232) (Mycoplasma hyopneumoniae)).